Consider the following 217-residue polypeptide: Kunitz-type trypsin inhibitor-like 1 protein (217 aa).

An N-terminal signal peptide occupies residues 1–26 (MKPLSPLTLSFFLFVFITNLSLAFSN). Disulfide bonds link Cys-70–Cys-115 and Cys-168–Cys-175. Asn-191 carries an N-linked (GlcNAc...) asparagine glycan.

It belongs to the protease inhibitor I3 (leguminous Kunitz-type inhibitor) family. As to expression, expressed in roots, leaves, epidermal layers of elongating stems, meristems and in the vascular system.

Its subcellular location is the secreted. In terms of biological role, might act as a protease inhibitor involved in plant defense responses. This chain is Kunitz-type trypsin inhibitor-like 1 protein (PIP20-1), found in Pisum sativum (Garden pea).